The primary structure comprises 295 residues: tRNA-cytidine(32) 2-sulfurtransferase (295 aa).

A PP-loop motif motif is present at residues 63–68 (SGGKDS). Residues C138, C141, and C229 each contribute to the [4Fe-4S] cluster site.

Belongs to the TtcA family. As to quaternary structure, homodimer. It depends on Mg(2+) as a cofactor. The cofactor is [4Fe-4S] cluster.

It localises to the cytoplasm. It carries out the reaction cytidine(32) in tRNA + S-sulfanyl-L-cysteinyl-[cysteine desulfurase] + AH2 + ATP = 2-thiocytidine(32) in tRNA + L-cysteinyl-[cysteine desulfurase] + A + AMP + diphosphate + H(+). Its pathway is tRNA modification. Catalyzes the ATP-dependent 2-thiolation of cytidine in position 32 of tRNA, to form 2-thiocytidine (s(2)C32). The sulfur atoms are provided by the cysteine/cysteine desulfurase (IscS) system. This chain is tRNA-cytidine(32) 2-sulfurtransferase, found in Hyphomonas neptunium (strain ATCC 15444).